The sequence spans 170 residues: Ubiquitin-conjugating enzyme E2 J2-like (170 aa).

The region spanning 15-165 (DCITRLKREF…NKTFCELFPY (151 aa)) is the UBC core domain. The active-site Glycyl thioester intermediate is the C97.

The protein belongs to the ubiquitin-conjugating enzyme family.

It catalyses the reaction S-ubiquitinyl-[E1 ubiquitin-activating enzyme]-L-cysteine + [E2 ubiquitin-conjugating enzyme]-L-cysteine = [E1 ubiquitin-activating enzyme]-L-cysteine + S-ubiquitinyl-[E2 ubiquitin-conjugating enzyme]-L-cysteine.. The protein operates within protein modification; protein ubiquitination. Functionally, catalyzes the covalent attachment of ubiquitin to other proteins. The sequence is that of Ubiquitin-conjugating enzyme E2 J2-like from Dictyostelium discoideum (Social amoeba).